The sequence spans 599 residues: DNA mismatch repair protein MutL (599 aa).

It belongs to the DNA mismatch repair MutL/HexB family.

In terms of biological role, this protein is involved in the repair of mismatches in DNA. It is required for dam-dependent methyl-directed DNA mismatch repair. May act as a 'molecular matchmaker', a protein that promotes the formation of a stable complex between two or more DNA-binding proteins in an ATP-dependent manner without itself being part of a final effector complex. The sequence is that of DNA mismatch repair protein MutL from Rhodopseudomonas palustris (strain BisB18).